Reading from the N-terminus, the 200-residue chain is Probable gluconokinase (200 aa).

An ATP-binding site is contributed by 34-41 (GVSGSGKT).

The protein belongs to the gluconokinase GntK/GntV family.

It catalyses the reaction D-gluconate + ATP = 6-phospho-D-gluconate + ADP + H(+). The protein operates within carbohydrate acid metabolism; D-gluconate degradation. This is Probable gluconokinase from Dictyostelium discoideum (Social amoeba).